The sequence spans 690 residues: Iron-sulfur clusters transporter ATM1, mitochondrial (690 aa).

The N-terminal 26 residues, 1-26, are a transit peptide targeting the mitochondrion; the sequence is MLLLPRCPVIGRIVRSKFRSGLIRNH. The Mitochondrial matrix segment spans residues 27–110; it reads SPVIFTVSKL…PKGNNKVRIR (84 aa). Residues 111 to 132 form a helical membrane-spanning segment; it reads VLIALGLLISAKILNVQVPFFF. The ABC transmembrane type-1 domain occupies 111-401; the sequence is VLIALGLLIS…LGSVYRDLKQ (291 aa). The Mitochondrial intermembrane segment spans residues 133–155; sequence KQTIDSMNIAWDDPTVALPAAIG. Residues 156–179 form a helical membrane-spanning segment; that stretch reads LTILCYGVARFGSVLFGELRNAVF. Over 180 to 228 the chain is Mitochondrial matrix; it reads AKVAQNAIRTVSLQTFQHLMKLDLGWHLSRQTGGLTRAMDRGTKGISQV. Residues 229 to 252 traverse the membrane as a helical segment; that stretch reads LTAMVFHIIPISFEISVVCGILTY. Q253 is a topological domain (mitochondrial intermembrane). A helical membrane pass occupies residues 254-274; it reads FGASFAAITFSTMLLYSIFTI. Residues 275-340 lie on the Mitochondrial matrix side of the membrane; the sequence is KTTAWRTHFR…SQIKVSQSLA (66 aa). Glutathione-binding positions include 280 to 284 and 343 to 346; these read RTHFR and NSGQ. The chain crosses the membrane as a helical span at residues 341–359; that stretch reads FLNSGQNLIFTTALTAMMY. At 360–374 the chain is on the mitochondrial intermembrane side; the sequence is MGCTGVIGGNLTVGD. Residues 375 to 396 form a helical membrane-spanning segment; the sequence is LVLINQLVFQLSVPLNFLGSVY. G393 provides a ligand contact to glutathione. Residues 397–690 lie on the Mitochondrial matrix side of the membrane; that stretch reads RDLKQSLIDM…ENELKDQQEL (294 aa). In terms of domain architecture, ABC transporter spans 436 to 672; the sequence is ITFENVTFGY…PGSLYRELWT (237 aa). Residues Y445 and 469–480 contribute to the ATP site; that span reads GSSGSGKSTILK.

It belongs to the ABC transporter superfamily. ABCB family. Heavy Metal importer (TC 3.A.1.210) subfamily. As to quaternary structure, homodimer.

It is found in the mitochondrion inner membrane. In terms of biological role, performs an essential function in the generation of cytoplasmic iron-sulfur proteins by mediating the ATP-dependent export of Fe/S cluster precursors synthesized by NFS1 and other mitochondrial proteins. Hydrolyzes ATP. Binds glutathione and may function by transporting a glutathione-conjugated iron-sulfur compound. This chain is Iron-sulfur clusters transporter ATM1, mitochondrial, found in Saccharomyces cerevisiae (strain ATCC 204508 / S288c) (Baker's yeast).